The following is a 290-amino-acid chain: ATP synthase gamma chain (290 aa).

Belongs to the ATPase gamma chain family. As to quaternary structure, F-type ATPases have 2 components, CF(1) - the catalytic core - and CF(0) - the membrane proton channel. CF(1) has five subunits: alpha(3), beta(3), gamma(1), delta(1), epsilon(1). CF(0) has three main subunits: a, b and c.

Its subcellular location is the cell inner membrane. Its function is as follows. Produces ATP from ADP in the presence of a proton gradient across the membrane. The gamma chain is believed to be important in regulating ATPase activity and the flow of protons through the CF(0) complex. The polypeptide is ATP synthase gamma chain (Anaeromyxobacter sp. (strain K)).